Consider the following 302-residue polypeptide: UTP--glucose-1-phosphate uridylyltransferase (302 aa).

Belongs to the UDPGP type 2 family. As to quaternary structure, homotetramer or homopentamer. Requires Mg(2+) as cofactor.

The catalysed reaction is alpha-D-glucose 1-phosphate + UTP + H(+) = UDP-alpha-D-glucose + diphosphate. May play a role in stationary phase survival. This is UTP--glucose-1-phosphate uridylyltransferase (galU) from Escherichia coli O157:H7.